A 63-amino-acid chain; its full sequence is DNA gyrase inhibitor YacG (63 aa).

4 residues coordinate Zn(2+): Cys9, Cys12, Cys28, and Cys32.

The protein belongs to the DNA gyrase inhibitor YacG family. In terms of assembly, interacts with GyrB. Zn(2+) is required as a cofactor.

Functionally, inhibits all the catalytic activities of DNA gyrase by preventing its interaction with DNA. Acts by binding directly to the C-terminal domain of GyrB, which probably disrupts DNA binding by the gyrase. The protein is DNA gyrase inhibitor YacG of Salmonella arizonae (strain ATCC BAA-731 / CDC346-86 / RSK2980).